A 307-amino-acid chain; its full sequence is MIRVKVPATTANIGPGFDSLGIALQLYNIIEVEEINFGLEINIPVEDQAYIETNEHNLVYQAMKRLFDAVNIHPKGLRINLINNIPIARGLGSSAACIVGGLVVANELLNNPLKKEEIIYLAATMDGHTDNILPAFVGGLTVGSLLEKEVKYVKMDLPTQLKLLAIIPDFHFSTKKARSLLPKNVPIEDAVFNISRVGLLVASLVTSHFENLSEATKDKIHQPYRKDFIPYWEEITSKLMKIGTKGYFLSGSGPTIMGILDGDYKNIEDEMVNFLSHFDQGYKVTVLDVCHNGLEVINDEGSNGCYR.

Residue 86–96 (PIARGLGSSAA) coordinates ATP.

The protein belongs to the GHMP kinase family. Homoserine kinase subfamily.

It localises to the cytoplasm. The enzyme catalyses L-homoserine + ATP = O-phospho-L-homoserine + ADP + H(+). The protein operates within amino-acid biosynthesis; L-threonine biosynthesis; L-threonine from L-aspartate: step 4/5. Catalyzes the ATP-dependent phosphorylation of L-homoserine to L-homoserine phosphate. This is Homoserine kinase from Petrotoga mobilis (strain DSM 10674 / SJ95).